The primary structure comprises 565 residues: NAD-dependent malic enzyme (565 aa).

Y104 serves as the catalytic Proton donor. R157 provides a ligand contact to NAD(+). K175 acts as the Proton acceptor in catalysis. Residues E246, D247, and D270 each coordinate a divalent metal cation. Positions 270 and 418 each coordinate NAD(+).

It belongs to the malic enzymes family. Homotetramer. Mg(2+) serves as cofactor. It depends on Mn(2+) as a cofactor.

The catalysed reaction is (S)-malate + NAD(+) = pyruvate + CO2 + NADH. It catalyses the reaction oxaloacetate + H(+) = pyruvate + CO2. The sequence is that of NAD-dependent malic enzyme from Escherichia coli (strain K12 / MC4100 / BW2952).